A 377-amino-acid polypeptide reads, in one-letter code: Succinyl-diaminopimelate desuccinylase (377 aa).

Residue histidine 68 coordinates Zn(2+). Residue aspartate 70 is part of the active site. Aspartate 101 contacts Zn(2+). Glutamate 135 functions as the Proton acceptor in the catalytic mechanism. The Zn(2+) site is built by glutamate 136, glutamate 164, and histidine 350.

This sequence belongs to the peptidase M20A family. DapE subfamily. Homodimer. It depends on Zn(2+) as a cofactor. Co(2+) is required as a cofactor.

The catalysed reaction is N-succinyl-(2S,6S)-2,6-diaminopimelate + H2O = (2S,6S)-2,6-diaminopimelate + succinate. It participates in amino-acid biosynthesis; L-lysine biosynthesis via DAP pathway; LL-2,6-diaminopimelate from (S)-tetrahydrodipicolinate (succinylase route): step 3/3. Functionally, catalyzes the hydrolysis of N-succinyl-L,L-diaminopimelic acid (SDAP), forming succinate and LL-2,6-diaminopimelate (DAP), an intermediate involved in the bacterial biosynthesis of lysine and meso-diaminopimelic acid, an essential component of bacterial cell walls. This Acinetobacter baumannii (strain SDF) protein is Succinyl-diaminopimelate desuccinylase.